The sequence spans 35 residues: U5-ctenitoxin-Co1a (35 aa).

4 disulfides stabilise this stretch: cysteine 4-cysteine 18, cysteine 11-cysteine 24, cysteine 17-cysteine 32, and cysteine 26-cysteine 30.

In terms of tissue distribution, expressed by the venom gland.

Its subcellular location is the secreted. Its function is as follows. Blocks voltage-gated sodium channels (Nav). This chain is U5-ctenitoxin-Co1a, found in Ctenus ornatus (Brazilian spider).